We begin with the raw amino-acid sequence, 544 residues long: Glucose-6-phosphate isomerase (544 aa).

Glu-354 functions as the Proton donor in the catalytic mechanism. Active-site residues include His-385 and Lys-510.

Belongs to the GPI family.

Its subcellular location is the cytoplasm. It catalyses the reaction alpha-D-glucose 6-phosphate = beta-D-fructose 6-phosphate. It functions in the pathway carbohydrate biosynthesis; gluconeogenesis. Its pathway is carbohydrate degradation; glycolysis; D-glyceraldehyde 3-phosphate and glycerone phosphate from D-glucose: step 2/4. Catalyzes the reversible isomerization of glucose-6-phosphate to fructose-6-phosphate. The protein is Glucose-6-phosphate isomerase of Deinococcus deserti (strain DSM 17065 / CIP 109153 / LMG 22923 / VCD115).